A 441-amino-acid polypeptide reads, in one-letter code: MTMLLDGGPQFPTLGVGGFGTARHHEMSNRDAGMGLNPFTEPSHAAAFKLSPASHDLSSSQSSAFTPQASGYANSLGHHAGQVPSYGGAAFNSTRDFLFRNRNSGIADSTSAGGQHGLFASHGPPGIGEPPGHLIFPGLHEQSSSHTSSNGHVVNGQMHLGLRGDIFGRPDPYRAVPSPRTDHYAAAQFHNYNHMNMSMNVAAHHGPGAFFRYMRQPIKQELSCKWLEESPMNRPQKTCDRTFSSMHELVTHMTMEHVGGPEQTNHICYWEECPRGGKSFKAKYKLVNHIRVHTGEKPFPCPFPGCGKIFARSENLKIHKRTHTGEKPFKCEFEGCDRRFANSSDRKKHMHVHTSDKPYICKVCDKSYTHPSSLRKHMKVHESQGSDSSPAASSGYESATPPAMVSANSEEPSKNSSATHQTNNSSHNTGLLPPNFNEWYV.

A C2H2-type 1; atypical zinc finger spans residues 222–257 (LSCKWLEESPMNRPQKTCDRTFSSMHELVTHMTMEH). A C2H2-type 2; atypical zinc finger spans residues 266-293 (HICYWEECPRGGKSFKAKYKLVNHIRVH). 3 consecutive C2H2-type zinc fingers follow at residues 299–323 (FPCP…KRTH), 329–353 (FKCE…MHVH), and 359–381 (YICK…MKVH). The tract at residues 375-441 (RKHMKVHESQ…LPPNFNEWYV (67 aa)) is disordered. Over residues 383-399 (SQGSDSSPAASSGYESA) the composition is skewed to low complexity. Polar residues predominate over residues 406-429 (SANSEEPSKNSSATHQTNNSSHNT).

This sequence belongs to the GLI C2H2-type zinc-finger protein family.

It is found in the nucleus. The protein resides in the cytoplasm. Probably acts as a transcriptional activator. May bind to the minimal GLI-consensus sequence 5'-GGGTGGTC-3'. Can determine the ectodermal cell fate and promote the earliest step of neural and neural crest development. Involved in establishing left-right asymmetry in the embryo. This Xenopus tropicalis (Western clawed frog) protein is Zinc finger protein ZIC 3 (zic3).